The sequence spans 442 residues: Ribosomal protein uS12 methylthiotransferase RimO (442 aa).

One can recognise an MTTase N-terminal domain in the interval 5 to 117 (PSIGVVSLGC…VLDAIHAALP (113 aa)). C14, C50, C79, C148, C152, and C155 together coordinate [4Fe-4S] cluster. The 238-residue stretch at 134–371 (LTPPHYAYLK…MAVQEAISRQ (238 aa)) folds into the Radical SAM core domain. The 68-residue stretch at 374 to 441 (QRRVGQRQRV…AHDLYGMVVS (68 aa)) folds into the TRAM domain.

It belongs to the methylthiotransferase family. RimO subfamily. Requires [4Fe-4S] cluster as cofactor.

It is found in the cytoplasm. It carries out the reaction L-aspartate(89)-[ribosomal protein uS12]-hydrogen + (sulfur carrier)-SH + AH2 + 2 S-adenosyl-L-methionine = 3-methylsulfanyl-L-aspartate(89)-[ribosomal protein uS12]-hydrogen + (sulfur carrier)-H + 5'-deoxyadenosine + L-methionine + A + S-adenosyl-L-homocysteine + 2 H(+). Its function is as follows. Catalyzes the methylthiolation of an aspartic acid residue of ribosomal protein uS12. This is Ribosomal protein uS12 methylthiotransferase RimO from Acidithiobacillus ferrooxidans (strain ATCC 53993 / BNL-5-31) (Leptospirillum ferrooxidans (ATCC 53993)).